The primary structure comprises 1123 residues: Polyprotein of EF-Ts, chloroplastic (1123 aa).

A chloroplast-targeting transit peptide spans 1–73 (MTPVVHCSVG…SSARRPRTLS (73 aa)). The tract at residues 68 to 141 (RPRTLSAATV…MPPLNDEDLV (74 aa)) is disordered. Over residues 94-103 (TSEESSEDTA) the composition is skewed to acidic residues. A compositionally biased stretch (low complexity) spans 106–119 (TAEASEQAEASTSS). An S1 motif 1 domain is found at 143 to 212 (GASFTGKVRS…ETGRISLTMR (70 aa)). A disordered region spans residues 213-258 (TGGDYVKPKTETPKAASGGRNTTATTSRGSPRQTRERDEAKSMGET). Residues 231–244 (GRNTTATTSRGSPR) show a composition bias toward polar residues. Residues 245–254 (QTRERDEAKS) show a composition bias toward basic and acidic residues. The 69-residue stretch at 263–331 (GQFLDGVVKN…VRGQVTLTMK (69 aa)) folds into the S1 motif 2 domain. 2 disordered regions span residues 443 to 670 (KTES…SEKT) and 894 to 923 (VAAQTAAKAPPAAPPKDDKPEETAETEEKK). A compositionally biased stretch (polar residues) spans 486-501 (EGSVTTEPTEAASTEF). The segment covering 551–587 (SVASTESVTAVVEESAPVSSVAIEVPAPEASEASAQE) has biased composition (low complexity). Residues 630–639 (KPDEPEESLI) are compositionally biased toward acidic residues. Low complexity-rich tracts occupy residues 657–670 (AAVPEEVAASSEKT) and 894–903 (VAAQTAAKAP). A compositionally biased stretch (basic and acidic residues) spans 908-923 (PKDDKPEETAETEEKK).

This sequence belongs to the EF-Ts family. Component of the chloroplast ribosome 30S and 70S subunits, as well as polysomes. As to quaternary structure, component of the chloroplast ribosome 70S subunit, and at low levels, present in polysomes. In terms of assembly, associates transiently with chloroplast polysomes.

The protein resides in the plastid. It is found in the chloroplast. Its function is as follows. Associates with the EF-Tu.GDP complex and induces the exchange of GDP to GTP. It remains bound to the aminoacyl-tRNA.EF-Tu.GTP complex up to the GTP hydrolysis stage on the ribosome. In terms of biological role, binds to psbD and psbA 5'-untranslated regions (UTRs) in vitro. This chain is Polyprotein of EF-Ts, chloroplastic, found in Oryza sativa subsp. indica (Rice).